The chain runs to 714 residues: Polyribonucleotide nucleotidyltransferase (714 aa).

The Mg(2+) site is built by Asp484 and Asp490. The KH domain occupies 551 to 610 (PRIMVINIAPEKVREVIGPGGKVINKIIDETGVKIDTEDDGKITVAGENTESAQRAIDMI). The S1 motif domain maps to 620-688 (GEKYLGRVTK…DQGKMTLSRK (69 aa)). The segment at 685–714 (LSRKALLPKPERKEKKNFDKKSEDQNSEDK) is disordered. The segment covering 693-714 (KPERKEKKNFDKKSEDQNSEDK) has biased composition (basic and acidic residues).

The protein belongs to the polyribonucleotide nucleotidyltransferase family. The cofactor is Mg(2+).

The protein resides in the cytoplasm. The enzyme catalyses RNA(n+1) + phosphate = RNA(n) + a ribonucleoside 5'-diphosphate. Its function is as follows. Involved in mRNA degradation. Catalyzes the phosphorolysis of single-stranded polyribonucleotides processively in the 3'- to 5'-direction. The sequence is that of Polyribonucleotide nucleotidyltransferase from Finegoldia magna (strain ATCC 29328 / DSM 20472 / WAL 2508) (Peptostreptococcus magnus).